The primary structure comprises 361 residues: DNA replication and repair protein RecF (361 aa).

ATP is bound at residue 30-37; that stretch reads GANGSGKT.

The protein belongs to the RecF family.

The protein resides in the cytoplasm. Functionally, the RecF protein is involved in DNA metabolism; it is required for DNA replication and normal SOS inducibility. RecF binds preferentially to single-stranded, linear DNA. It also seems to bind ATP. This Chromohalobacter salexigens (strain ATCC BAA-138 / DSM 3043 / CIP 106854 / NCIMB 13768 / 1H11) protein is DNA replication and repair protein RecF.